The following is a 190-amino-acid chain: Putative transcription factor ovo-like protein 3 (190 aa).

Disordered regions lie at residues 1-21 (MPRAFLVRSRRPQPPNWGHLP) and 35-65 (SLGGPPAQQSSSVRDPWTAQPTQGNLTSAPR). Over residues 41 to 62 (AQQSSSVRDPWTAQPTQGNLTS) the composition is skewed to polar residues. C2H2-type zinc fingers lie at residues 70–92 (LGCPLCPKAFPLQRMLTRHLKCH), 98–120 (HLCRCCGKGFHDAFDLKRHMRTH), 126–149 (FRCSACGKAFTQRCSLEAHLAKVH), and 165–187 (HVCEDCGFTSSRPDTYAQHRALH).

This sequence belongs to the krueppel C2H2-type zinc-finger protein family.

The protein resides in the nucleus. In terms of biological role, may act as a transcription regulator. This is Putative transcription factor ovo-like protein 3 (OVOL3) from Homo sapiens (Human).